The following is an 868-amino-acid chain: MISSVFRKIFGTKNDREVKKYIKRVAQINALEPTYEKMSDDELKIKFNELKAQVVEEKVTLDQILNDVFALVREASKRVLKMRHFDVQLIGGMVLNEGRIAEMKTGEGKTLVATLPVILNAMSGKGVHVVTVNDYLAKRDATQMGELYNFLGLSVDVILSGGYDDEVRQAAYNADITYGTNSEFGFDYLRDNMKFEAGQKVQRGHNFVIVDEVDSILIDEARTPLIISGPTNRTLDGYIRADQVAKQLTRGTPADPNMPGSKPTGDFIVDEKNRTIMITEAGISKAEKLFGVENLYNLENAVLSHHLDQALKAHNLFEKDVHYVVKDGEVVIVDEFTGRLSEGRRFSEGLHQALEAKEGVKIQEESQTLADTTYQNYFRMYKKLAGMTGTAQTEATEFSQIYNLEVISIPTNVPVKRIDQNDLIYKTQNEKFKAVIDEVKKAHEKGQPVLVGTASIERSEVLHEMLKKAGIPHSVLNAKNHEKEAEIIAQAGVKGAVTIATNMAGRGVDIRINDEVRDLGGLYIIGTERHESRRIDNQLRGRAGRQGDPGMSRFYLSLEDNLLRIFGSDRIKAIMDRLGIDEGESIESRMVTRAVENAQKKVESLHFEARKHLLEYDDVANEQRKTIYKYRDELLDKNYDMSEKIAQNRVEYATNLLDTAEIFHGGLKDDYDIKNLCSIILADCGEEIDESELKGLEYNELVEKIAQILEVRYNEKMSVLNEEQRKDIEKILYLQVLDNAWREHLYQMDILKTGIGLRGYNQKDPLVEYKKESYNLFMELVGRLKTESVKTLQIVRFKSREEQEEQARMMLEASQNAENEPLNYNNQGEDENFTPEKKIPRNAPCPCGSGKKYKDCHGKSGPKKGIFA.

ATP-binding positions include glutamine 88, glycine 106 to threonine 110, and aspartate 509. The span at asparagine 816–glutamine 827 shows a compositional bias: polar residues. A disordered region spans residues asparagine 816–alanine 868. 4 residues coordinate Zn(2+): cysteine 845, cysteine 847, cysteine 856, and histidine 857.

It belongs to the SecA family. In terms of assembly, monomer and homodimer. Part of the essential Sec protein translocation apparatus which comprises SecA, SecYEG and auxiliary proteins SecDF-YajC and YidC. The cofactor is Zn(2+).

It is found in the cell inner membrane. The protein resides in the cytoplasm. It catalyses the reaction ATP + H2O + cellular proteinSide 1 = ADP + phosphate + cellular proteinSide 2.. Functionally, part of the Sec protein translocase complex. Interacts with the SecYEG preprotein conducting channel. Has a central role in coupling the hydrolysis of ATP to the transfer of proteins into and across the cell membrane, serving as an ATP-driven molecular motor driving the stepwise translocation of polypeptide chains across the membrane. This chain is Protein translocase subunit SecA, found in Campylobacter concisus (strain 13826).